The sequence spans 506 residues: EPTC-inducible aldehyde dehydrogenase (506 aa).

Residue 219-225 participates in NAD(+) binding; the sequence is GFGVEAG. Catalysis depends on residues glutamate 263 and cysteine 302.

It belongs to the aldehyde dehydrogenase family.

It carries out the reaction an aldehyde + NAD(+) + H2O = a carboxylate + NADH + 2 H(+). In terms of biological role, degrades all aldehydes potentially generated by N dealkylation of thiocarbamates and may also participate in ethanolamine metabolism and further assimilation of degradation products by thiocarbamate-induced cytochrome P-450. This Rhodococcus erythropolis (Arthrobacter picolinophilus) protein is EPTC-inducible aldehyde dehydrogenase (thcA).